A 678-amino-acid polypeptide reads, in one-letter code: MTRVCRALLFVLCGIFVHAQENELHFFGPRTDVLVVFTASREAQERETRAVQQLRLLVQDFEHQTPDVSVLVAITAHDHPPVPDFVPVDRLTGTKKLISLISSYKAPIVLILDETTGPPRLHTGAHRTVCPPWLLQAVYQHLTSHHVPIRYRDFDAILHRLGWLHEDPRHALYIKEHIPAVRMENSLYPPGALHTLPALLTQVYSEEWDTHYVSVSYGGTLYLIREQFFVILILGAVITLLLSLAIFSFLSDSRKRHYWNTILAMWWLPAILGVLSVCSVFVATQLTALFFLIRFGTHTSTGALPLLALIVKHSIAIALSCVCMANSKTIRDSMLHNGFIGGYLASTLCLLYAVLFSVIDFSLSAVFALEYALSLVFFSAQRKTTRRIMLAMMFLLFAPFLYAYLKNSAVTAPLSFHQSNVFFALGCVPFMLFMLTLFFEREKSHPRIPFIRRRNLLLSGALLTVLVINGVLWSVSLSSTRIPQEITACYRISERGLTLSLHSPLPIPRHIRARTHARLSTAEIQKAQDHLQISMDSRSYFGGRINVLEVRSQLRAQAIELRITSPHGTAAYEADRPFTRLEQGSVVRFISQARPPLPFTVTFSGDQNSTMQVQATVWTYDNPLQDAPPVMQDTTVRFIPMFELTRDVLFPSPSSQGVHATPEKNACIRDETVPNLQE.

The next 8 membrane-spanning stretches (helical) occupy residues 228 to 250, 263 to 285, 300 to 322, 334 to 356, 361 to 380, 387 to 405, 420 to 439, and 455 to 477; these read FFVILILGAVITLLLSLAIFSFL, LAMWWLPAILGVLSVCSVFVATQ, STGALPLLALIVKHSIAIALSCV, MLHNGFIGGYLASTLCLLYAVLF, FSLSAVFALEYALSLVFFSA, RIMLAMMFLLFAPFLYAYL, NVFFALGCVPFMLFMLTLFF, and NLLLSGALLTVLVINGVLWSVSL. The segment at 653–678 is disordered; the sequence is PSSQGVHATPEKNACIRDETVPNLQE.

It is found in the cell membrane. This is an uncharacterized protein from Treponema pallidum (strain Nichols).